Reading from the N-terminus, the 170-residue chain is Opacity-related protein POPM3 (170 aa).

It belongs to the opacity porin family.

Its subcellular location is the cell outer membrane. The protein is Opacity-related protein POPM3 (opr) of Neisseria meningitidis serogroup C.